Consider the following 117-residue polypeptide: Holo-[acyl-carrier-protein] synthase (117 aa).

Residues D8 and E55 each coordinate Mg(2+).

Belongs to the P-Pant transferase superfamily. AcpS family. Mg(2+) serves as cofactor.

The protein resides in the cytoplasm. The enzyme catalyses apo-[ACP] + CoA = holo-[ACP] + adenosine 3',5'-bisphosphate + H(+). Transfers the 4'-phosphopantetheine moiety from coenzyme A to a Ser of acyl-carrier-protein. The sequence is that of Holo-[acyl-carrier-protein] synthase from Finegoldia magna (strain ATCC 29328 / DSM 20472 / WAL 2508) (Peptostreptococcus magnus).